A 255-amino-acid polypeptide reads, in one-letter code: Pyridoxine 5'-phosphate synthase (255 aa).

3-amino-2-oxopropyl phosphate is bound by residues N8 and R19. Residue H44 is the Proton acceptor of the active site. The 1-deoxy-D-xylulose 5-phosphate site is built by R46 and H51. E74 (proton acceptor) is an active-site residue. A 1-deoxy-D-xylulose 5-phosphate-binding site is contributed by T111. The active-site Proton donor is H202. Residues D203 and 225-226 (GH) each bind 3-amino-2-oxopropyl phosphate.

This sequence belongs to the PNP synthase family. As to quaternary structure, homooctamer; tetramer of dimers.

The protein resides in the cytoplasm. The catalysed reaction is 3-amino-2-oxopropyl phosphate + 1-deoxy-D-xylulose 5-phosphate = pyridoxine 5'-phosphate + phosphate + 2 H2O + H(+). It functions in the pathway cofactor biosynthesis; pyridoxine 5'-phosphate biosynthesis; pyridoxine 5'-phosphate from D-erythrose 4-phosphate: step 5/5. Its function is as follows. Catalyzes the complicated ring closure reaction between the two acyclic compounds 1-deoxy-D-xylulose-5-phosphate (DXP) and 3-amino-2-oxopropyl phosphate (1-amino-acetone-3-phosphate or AAP) to form pyridoxine 5'-phosphate (PNP) and inorganic phosphate. This Xanthomonas oryzae pv. oryzae (strain MAFF 311018) protein is Pyridoxine 5'-phosphate synthase.